Consider the following 174-residue polypeptide: Micrococcal nuclease (174 aa).

Positions 1-23 (MKSALAALRAVAAAVVLIVSVPA) are cleaved as a signal peptide. Residues Arg52, Glu60, and Arg94 contribute to the active site.

This sequence belongs to the thermonuclease family.

The enzyme catalyses Endonucleolytic cleavage to nucleoside 3'-phosphates and 3'-phosphooligonucleotide end-products.. The polypeptide is Micrococcal nuclease (nuc) (Shigella flexneri).